A 700-amino-acid chain; its full sequence is ATP-dependent DNA helicase UvrD2 (700 aa).

One can recognise a UvrD-like helicase ATP-binding domain in the interval 10–301; that stretch reads AGLDDQQREA…VRLERDYRST (292 aa). ATP-binding positions include 34-39 and Arg299; that span reads GTGKTR. One can recognise a UvrD-like helicase C-terminal domain in the interval 302–553; that stretch reads PQVVSLANRV…LYVGITRARV (252 aa). The disordered stretch occupies residues 565 to 595; sequence PGGRQSRKPSRFLNGIAPQTRADPVPGTSRR. Positions 626-700 constitute an HRDC domain; it reads ADVDEELLLQ…DVLQLVRGRT (75 aa).

Belongs to the helicase family. UvrD subfamily. Mg(2+) serves as cofactor.

The enzyme catalyses Couples ATP hydrolysis with the unwinding of duplex DNA by translocating in the 3'-5' direction.. The catalysed reaction is ATP + H2O = ADP + phosphate + H(+). In terms of biological role, DNA-dependent ATPase, stimulated equally by ss- and dsDNA. Has both ATPase and helicase activities. The protein is ATP-dependent DNA helicase UvrD2 (uvrD2) of Mycobacterium bovis (strain ATCC BAA-935 / AF2122/97).